Consider the following 438-residue polypeptide: FRLVEKKTGKVWAGKFFKAYSAKEKENIRQEISIMNCLHHPKLVQCVDAFEEKANIVMVLEIVSGGELFERIIDEDFELTERECIKYMKQISEGVEYIHKQGIVHLDLKPENIMCVNKTGTRIKLIDFGLARRLENAGSLKVLFGTPEFVAPEVINYEPIGYATDMWSIGVICYILVSGLSPFMGDNDNETLANVTSATWDFDDEAFDEISDDAKDFISNLLKKDIKNRLNCTQCLQHPWLXXXTKNMEAKKLSKHRMKKYMARRKWQKTGNAVRAIGRLSSMAMISGLSGRKSSTGSPTSPLNAEKLESEEDVSQAFLEAVAEEKPHVKPYFSKTIRDLEVVEGSAARFDCKIEGYPDPEVVWFKDDQSIRESRHFQIDYQEDGNCSLIISDVCGDDDAKYTCKAVNSLGEATCTAELIVETMEEGEGEGGEEEEEE.

The 241-residue stretch at 1–241 folds into the Protein kinase domain; sequence FRLVEKKTGK…CTQCLQHPWL (241 aa). Lys15 is a binding site for ATP. The residue at position 97 (Tyr97) is a Phosphotyrosine; by ABL1. Asp107 serves as the catalytic Proton acceptor. Tyr157 is subject to Phosphotyrosine; by ABL1. Residues 233–296 form a calmodulin-binding region; sequence TQCLQHPWLX…SGLSGRKSST (64 aa). Residues Ser281, Ser282, Ser294, Ser295, and Ser298 each carry the phosphoserine modification. Positions 283–438 are telokin; it reads MAMISGLSGR…GEGGEEEEEE (156 aa). The interval 289-309 is disordered; sequence LSGRKSSTGSPTSPLNAEKLE. Positions 292–303 are enriched in polar residues; sequence RKSSTGSPTSPL. Thr300 is modified (phosphothreonine). Phosphoserine is present on Ser301. One can recognise an Ig-like C2-type domain in the interval 331 to 420; it reads PYFSKTIRDL…GEATCTAELI (90 aa). Cys352 and Cys404 are oxidised to a cystine.

The protein belongs to the protein kinase superfamily. CAMK Ser/Thr protein kinase family. As to quaternary structure, all isoforms including Telokin bind calmodulin. Interacts with SVIL. Interacts with CTTN; this interaction is reduced during thrombin-induced endothelial cell (EC) contraction but is promoted by the barrier-protective agonist sphingosine 1-phosphate (S1P) within lamellipodia. A complex made of ABL1, CTTN and MYLK regulates cortical actin-based cytoskeletal rearrangement critical to sphingosine 1-phosphate (S1P)-mediated endothelial cell (EC) barrier enhancement. Binds to NAA10/ARD1 and PTK2B/PYK2. The cofactor is Mg(2+). It depends on Ca(2+) as a cofactor. The C-terminus is deglutamylated by AGTPBP1/CCP1, AGBL1/CCP4 and AGBL4/CCP6, leading to the formation of Myosin light chain kinase, smooth muscle, deglutamylated form. The consequences of C-terminal deglutamylation are unknown. In terms of processing, can probably be down-regulated by phosphorylation. Tyrosine phosphorylation by ABL1 increases kinase activity, reverses MLCK-mediated inhibition of Arp2/3-mediated actin polymerization, and enhances CTTN-binding. Phosphorylation by SRC promotes CTTN binding.

The protein localises to the cytoplasm. It localises to the cell projection. Its subcellular location is the lamellipodium. It is found in the cleavage furrow. The protein resides in the cytoskeleton. The protein localises to the stress fiber. It catalyses the reaction L-seryl-[myosin light chain] + ATP = O-phospho-L-seryl-[myosin light chain] + ADP + H(+). The enzyme catalyses L-threonyl-[myosin light chain] + ATP = O-phospho-L-threonyl-[myosin light chain] + ADP + H(+). Calcium/calmodulin-dependent myosin light chain kinase implicated in smooth muscle contraction via phosphorylation of myosin light chains (MLC). Also regulates actin-myosin interaction through a non-kinase activity. Phosphorylates PTK2B/PYK2 and myosin light-chains. Involved in the inflammatory response (e.g. apoptosis, vascular permeability, leukocyte diapedesis), cell motility and morphology, airway hyperreactivity and other activities relevant to asthma. Required for tonic airway smooth muscle contraction that is necessary for physiological and asthmatic airway resistance. Necessary for gastrointestinal motility. Implicated in the regulation of endothelial as well as vascular permeability, probably via the regulation of cytoskeletal rearrangements. In the nervous system it has been shown to control the growth initiation of astrocytic processes in culture and to participate in transmitter release at synapses formed between cultured sympathetic ganglion cells. Critical participant in signaling sequences that result in fibroblast apoptosis. Plays a role in the regulation of epithelial cell survival. Required for epithelial wound healing, especially during actomyosin ring contraction during purse-string wound closure. Mediates RhoA-dependent membrane blebbing. Triggers TRPC5 channel activity in a calcium-dependent signaling, by inducing its subcellular localization at the plasma membrane. Promotes cell migration (including tumor cells) and tumor metastasis. PTK2B/PYK2 activation by phosphorylation mediates ITGB2 activation and is thus essential to trigger neutrophil transmigration during acute lung injury (ALI). May regulate optic nerve head astrocyte migration. Probably involved in mitotic cytoskeletal regulation. Regulates tight junction probably by modulating ZO-1 exchange in the perijunctional actomyosin ring. Mediates burn-induced microvascular barrier injury; triggers endothelial contraction in the development of microvascular hyperpermeability by phosphorylating MLC. Essential for intestinal barrier dysfunction. Mediates Giardia spp.-mediated reduced epithelial barrier function during giardiasis intestinal infection via reorganization of cytoskeletal F-actin and tight junctional ZO-1. Necessary for hypotonicity-induced Ca(2+) entry and subsequent activation of volume-sensitive organic osmolyte/anion channels (VSOAC) in cervical cancer cells. This is Myosin light chain kinase, smooth muscle (MYLK) from Ovis aries (Sheep).